A 318-amino-acid chain; its full sequence is Pyrroline-5-carboxylate reductase ucsG (318 aa).

Belongs to the pyrroline-5-carboxylate reductase family.

It participates in mycotoxin biosynthesis. In terms of biological role, pyrroline-5-carboxylate reductase; part of the gene cluster that mediates the biosynthesis of UCS1025A, a member of the pyrrolizidinone family that acts as a strong telomerase inhibitor and displays potent antibacterial and antitumor properties. These compounds share a hemiaminal-containing pyrrolizidinone core fused with a gamma-lactone, giving a furopyrrolizidine that is connected to a decalin fragment. The polyketide synthase module (PKS) of the PKS-NRPS ucsA is responsible for the synthesis of the polyketide backbone via the condensation of an acetyl-CoA starter unit with 6 malonyl-CoA units. The downstream nonribosomal peptide synthetase (NRPS) module then amidates the carboxyl end of the polyketide with a 2S,3S-methylproline derived from L-isoleucine by the 2-oxoglutarate-dependent dioxygenase ucsF which converts L-isoleucine to (4S,5S)-4-methylpyrroline-5-carboxylate that is further converted to 2S,3S-methylproline by the pyrroline-5-carboxylate reductase ucsG. Reductive release of the completed aminoacyl polyketide from the assembly line can form the 3-pyrrolin-2-one structure via an intramolecular Knoevenagel reaction. Because ucsA lacks a designated enoylreductase (ER) domain, the required activity is provided the enoyl reductase ucsL. This keto acyclic precursor is the substrate of the Diels-Alderase ucsH, that catalyzes the Diels-Alder cycloaddition. Oxidation of the 3S-methyl group to a carboxylate by the cytochrome P450 monooxygenase ucsK allows an oxa-Michael cyclization that might involve the reductase/dehydrogenase ucsI and which furnishes the furopyrrolizidine. The oxidase ucsJ likely plays a critical role in stereoselective reduction of the C5-C6 double bond to afford the required R-configured carboxylate group. Further enolization and oxidation at C5 by an unidentified enzyme affords the last intermediate that can undergo oxa-Michael cyclization to yield UCS1025A. This Acremonium sp protein is Pyrroline-5-carboxylate reductase ucsG.